Consider the following 642-residue polypeptide: Threonine--tRNA ligase (642 aa).

Residues 1 to 61 enclose the TGS domain; it reads MPVITLPDGS…ETDAELSIIT (61 aa). Positions 243–534 are catalytic; it reads DHRKIGKQLD…LIEEYAGRFP (292 aa). Residues cysteine 334, histidine 385, and histidine 511 each coordinate Zn(2+).

The protein belongs to the class-II aminoacyl-tRNA synthetase family. Homodimer. Zn(2+) serves as cofactor.

It is found in the cytoplasm. It catalyses the reaction tRNA(Thr) + L-threonine + ATP = L-threonyl-tRNA(Thr) + AMP + diphosphate + H(+). In terms of biological role, catalyzes the attachment of threonine to tRNA(Thr) in a two-step reaction: L-threonine is first activated by ATP to form Thr-AMP and then transferred to the acceptor end of tRNA(Thr). Also edits incorrectly charged L-seryl-tRNA(Thr). The sequence is that of Threonine--tRNA ligase from Shewanella oneidensis (strain ATCC 700550 / JCM 31522 / CIP 106686 / LMG 19005 / NCIMB 14063 / MR-1).